Consider the following 447-residue polypeptide: N-succinylarginine dihydrolase (447 aa).

Residues 19–28 (AGLSFGNEAS), Asn-110, and 137–138 (HR) each bind substrate. Glu-174 is an active-site residue. Arg-212 serves as a coordination point for substrate. His-248 is an active-site residue. Substrate contacts are provided by Asp-250 and Asn-359. Catalysis depends on Cys-365, which acts as the Nucleophile.

Belongs to the succinylarginine dihydrolase family. Homodimer.

The enzyme catalyses N(2)-succinyl-L-arginine + 2 H2O + 2 H(+) = N(2)-succinyl-L-ornithine + 2 NH4(+) + CO2. It functions in the pathway amino-acid degradation; L-arginine degradation via AST pathway; L-glutamate and succinate from L-arginine: step 2/5. In terms of biological role, catalyzes the hydrolysis of N(2)-succinylarginine into N(2)-succinylornithine, ammonia and CO(2). This is N-succinylarginine dihydrolase from Escherichia coli O139:H28 (strain E24377A / ETEC).